The sequence spans 207 residues: Small ribosomal subunit protein uS4 (207 aa).

Positions 31 to 51 are disordered; it reads KCKLDSKPGQHGRTSGARTSD. The S4 RNA-binding domain maps to 97–162; the sequence is SRLDNVVYRM…QGRIRESLDL (66 aa).

It belongs to the universal ribosomal protein uS4 family. Part of the 30S ribosomal subunit. Contacts protein S5. The interaction surface between S4 and S5 is involved in control of translational fidelity.

Its function is as follows. One of the primary rRNA binding proteins, it binds directly to 16S rRNA where it nucleates assembly of the body of the 30S subunit. Functionally, with S5 and S12 plays an important role in translational accuracy. The sequence is that of Small ribosomal subunit protein uS4 from Bordetella bronchiseptica (strain ATCC BAA-588 / NCTC 13252 / RB50) (Alcaligenes bronchisepticus).